Reading from the N-terminus, the 133-residue chain is MVVMDTLANALSAIYNAEIRAKKEVVVWPASKLTLNVLKVLQREGYIGEFEYIDDGRWGKIKIQLLGRINKIGVIKPRYPVKHRELAEFPEWLKRYLPAYNIGVIIVSTPYGVLSHKEAVEKQTGGVLLAYCY.

This sequence belongs to the universal ribosomal protein uS8 family. Part of the 30S ribosomal subunit.

Functionally, one of the primary rRNA binding proteins, it binds directly to 16S rRNA central domain where it helps coordinate assembly of the platform of the 30S subunit. The chain is Small ribosomal subunit protein uS8 from Desulfurococcus amylolyticus (strain DSM 18924 / JCM 16383 / VKM B-2413 / 1221n) (Desulfurococcus kamchatkensis).